The chain runs to 155 residues: S-ribosylhomocysteine lyase (155 aa).

His53, His57, and Cys121 together coordinate Fe cation.

The protein belongs to the LuxS family. Homodimer. Fe cation is required as a cofactor.

It catalyses the reaction S-(5-deoxy-D-ribos-5-yl)-L-homocysteine = (S)-4,5-dihydroxypentane-2,3-dione + L-homocysteine. Functionally, involved in the synthesis of autoinducer 2 (AI-2) which is secreted by bacteria and is used to communicate both the cell density and the metabolic potential of the environment. The regulation of gene expression in response to changes in cell density is called quorum sensing. Catalyzes the transformation of S-ribosylhomocysteine (RHC) to homocysteine (HC) and 4,5-dihydroxy-2,3-pentadione (DPD). The polypeptide is S-ribosylhomocysteine lyase (Thermus thermophilus (strain ATCC BAA-163 / DSM 7039 / HB27)).